A 79-amino-acid polypeptide reads, in one-letter code: Short neurotoxin 7 (79 aa).

The signal sequence occupies residues M1–T21. 4 disulfide bridges follow: C24–C41, C34–C59, C63–C71, and C72–C77.

This sequence belongs to the three-finger toxin family. Short-chain subfamily. Type III alpha-neurotoxin sub-subfamily. In terms of tissue distribution, expressed by the venom gland.

The protein resides in the secreted. Its function is as follows. Binds with high affinity to muscle nicotinic acetylcholine receptor (nAChR) and hinders acetylcholine binding to the receptor, thereby impairing neuromuscular transmission. Competes with the binding of alpha-bungarotoxin on muscle AChR (from Torpedo) (IC(50)=0.30 uM). In vivo, causes muscle paralysis, spasms and increased respiration. The sequence is that of Short neurotoxin 7 from Pseudonaja textilis (Eastern brown snake).